Consider the following 189-residue polypeptide: Large ribosomal subunit protein uL13 (189 aa).

It belongs to the universal ribosomal protein uL13 family.

This chain is Large ribosomal subunit protein uL13 (rpl13a), found in Salmo trutta (Brown trout).